Here is a 498-residue protein sequence, read N- to C-terminus: ATP synthase subunit beta, chloroplastic (498 aa).

Gly172–Thr179 provides a ligand contact to ATP.

This sequence belongs to the ATPase alpha/beta chains family. As to quaternary structure, F-type ATPases have 2 components, CF(1) - the catalytic core - and CF(0) - the membrane proton channel. CF(1) has five subunits: alpha(3), beta(3), gamma(1), delta(1), epsilon(1). CF(0) has four main subunits: a(1), b(1), b'(1) and c(9-12).

The protein resides in the plastid. It is found in the chloroplast thylakoid membrane. It catalyses the reaction ATP + H2O + 4 H(+)(in) = ADP + phosphate + 5 H(+)(out). Produces ATP from ADP in the presence of a proton gradient across the membrane. The catalytic sites are hosted primarily by the beta subunits. The chain is ATP synthase subunit beta, chloroplastic from Galbulimima belgraveana (Northern pigeonberry ash).